The following is a 266-amino-acid chain: Pre-mRNA-splicing factor PRP11 (266 aa).

Positions 1–21 (MNYLEGVGSKKGGGGIASESQ) are disordered. The segment at 66–96 (LVCKLCNTMHMSWSSVERHLGGKKHGLNVLR) adopts a Matrin-type zinc-finger fold.

It belongs to the SF3A2 family. As to quaternary structure, belongs to the CWC complex (or CEF1-associated complex), a spliceosome sub-complex reminiscent of a late-stage spliceosome composed of the U2, U5 and U6 snRNAs and at least BUD13, BUD31, BRR2, CDC40, CEF1, CLF1, CUS1, CWC2, CWC15, CWC21, CWC22, CWC23, CWC24, CWC25, CWC27, ECM2, HSH155, IST3, ISY1, LEA1, MSL1, NTC20, PRP8, PRP9, PRP11, PRP19, PRP21, PRP22, PRP45, PRP46, SLU7, SMB1, SMD1, SMD2, SMD3, SMX2, SMX3, SNT309, SNU114, SPP2, SYF1, SYF2, RSE1 and YJU2. Interacts with CUS2.

It localises to the nucleus. In terms of biological role, mRNA splicing factors, PRP9, PRP11, and PRP21, are necessary for addition of the U2 snRNP to the pre-mRNA in an early step of spliceosome assembly. This is Pre-mRNA-splicing factor PRP11 (PRP11) from Saccharomyces cerevisiae (strain ATCC 204508 / S288c) (Baker's yeast).